The primary structure comprises 328 residues: Fructokinase-2 (328 aa).

Belongs to the carbohydrate kinase PfkB family.

It catalyses the reaction D-fructose + ATP = D-fructose 6-phosphate + ADP + H(+). It functions in the pathway glycan biosynthesis; starch biosynthesis. In terms of biological role, may play an important role in maintaining the flux of carbon towards starch formation. The chain is Fructokinase-2 (FRK2) from Solanum lycopersicum (Tomato).